Here is a 429-residue protein sequence, read N- to C-terminus: SET domain-containing protein 8 (429 aa).

Residues 17–232 (KQITIKKIRK…ENEEVTINYG (216 aa)) form the SET domain.

The protein belongs to the class V-like SAM-binding methyltransferase superfamily.

The protein resides in the cytoplasm. The protein localises to the nucleus. In Schizosaccharomyces pombe (strain 972 / ATCC 24843) (Fission yeast), this protein is SET domain-containing protein 8 (set8).